The following is a 336-amino-acid chain: Phospho-N-acetylmuramoyl-pentapeptide-transferase (336 aa).

10 helical membrane-spanning segments follow: residues 1–21 (MLPL…SLFL), 56–76 (IPTA…LLLF), 78–98 (IQLW…ALGW), 124–144 (CLAA…FLSF), 148–168 (FLGI…FAIA), 184–204 (GLDG…LVVA), 210–230 (PWAF…LGFL), 239–259 (VFMG…CAVL), 264–284 (FLLL…IVQV), and 314–334 (VVRN…IAVF).

Belongs to the glycosyltransferase 4 family. MraY subfamily. It depends on Mg(2+) as a cofactor.

The protein localises to the cell inner membrane. It catalyses the reaction UDP-N-acetyl-alpha-D-muramoyl-L-alanyl-gamma-D-glutamyl-meso-2,6-diaminopimeloyl-D-alanyl-D-alanine + di-trans,octa-cis-undecaprenyl phosphate = di-trans,octa-cis-undecaprenyl diphospho-N-acetyl-alpha-D-muramoyl-L-alanyl-D-glutamyl-meso-2,6-diaminopimeloyl-D-alanyl-D-alanine + UMP. It functions in the pathway cell wall biogenesis; peptidoglycan biosynthesis. In terms of biological role, catalyzes the initial step of the lipid cycle reactions in the biosynthesis of the cell wall peptidoglycan: transfers peptidoglycan precursor phospho-MurNAc-pentapeptide from UDP-MurNAc-pentapeptide onto the lipid carrier undecaprenyl phosphate, yielding undecaprenyl-pyrophosphoryl-MurNAc-pentapeptide, known as lipid I. This chain is Phospho-N-acetylmuramoyl-pentapeptide-transferase, found in Chlamydia trachomatis serovar L2b (strain UCH-1/proctitis).